The chain runs to 469 residues: SVGFKAGVKEYKLTYYTPEYETKETDILAAFRVTPQPGVPPEEAGAAVAAESSTGTWTTVWTDGLTSLDRYKGRCYHIEPVPGEEDQYIAYVAYPLDLFEEGSVTNMFTSIVGNVFGFKALRALRLEDLRIPVAYTKXFQGPXHGIQVERDKLNKYGRPLLGCTIKPKLGLSAKNYGRAVYECLRGGLDFTKDDENVNSQPFMRWRDRFLFCAEAFYKAQAETGEIKGHYLNATAGTCEEMIKRAVFARELGVPIXMHDYLTGGFTANTSLAHYCRDNGLLLHIHRAMHAVIDRQKNHGMHFRVLAKALRLSGGDHIHAGTVVGKLEGERDTTLGFVDLLRDDFIEKDRSRGIYFTQDWVSLPGVLPVRSGGIHVWHMPALTEIFGDDSVLQFGGGTLGHPWGNAPGAVANRVALEACVKARNEGRDLAAEGNEIIREASKWSPELAAACEVWKEIRFNFKAVDTLDPS.

Residue lysine 5 is modified to N6,N6,N6-trimethyllysine. Positions 114 and 164 each coordinate substrate. Catalysis depends on lysine 166, which acts as the Proton acceptor. Lysine 168 is a binding site for substrate. Mg(2+)-binding residues include lysine 192, aspartate 194, and glutamate 195. An N6-carboxylysine modification is found at lysine 192. Catalysis depends on histidine 285, which acts as the Proton acceptor. Residues arginine 286, histidine 318, and serine 370 each coordinate substrate.

This sequence belongs to the RuBisCO large chain family. Type I subfamily. As to quaternary structure, heterohexadecamer of 8 large chains and 8 small chains; disulfide-linked. The disulfide link is formed within the large subunit homodimers. Requires Mg(2+) as cofactor. In terms of processing, the disulfide bond which can form in the large chain dimeric partners within the hexadecamer appears to be associated with oxidative stress and protein turnover.

The protein resides in the plastid. The protein localises to the chloroplast. The catalysed reaction is 2 (2R)-3-phosphoglycerate + 2 H(+) = D-ribulose 1,5-bisphosphate + CO2 + H2O. It catalyses the reaction D-ribulose 1,5-bisphosphate + O2 = 2-phosphoglycolate + (2R)-3-phosphoglycerate + 2 H(+). Functionally, ruBisCO catalyzes two reactions: the carboxylation of D-ribulose 1,5-bisphosphate, the primary event in carbon dioxide fixation, as well as the oxidative fragmentation of the pentose substrate in the photorespiration process. Both reactions occur simultaneously and in competition at the same active site. This Fleroya rubrostipulata (Mitragyna rubrostipulata) protein is Ribulose bisphosphate carboxylase large chain.